The primary structure comprises 324 residues: Aldo-keto reductase family 1 member C15 (324 aa).

NADP(+)-binding positions include 24–26 and aspartate 51; that span reads TFA. Tyrosine 56 acts as the Proton donor in catalysis. Histidine 118 contacts substrate. NADP(+)-binding positions include 167–168, glutamine 191, 217–225, and 269–281; these read SN, YSALGSHRD, and LAKS…IKEN.

It belongs to the aldo/keto reductase family. As to quaternary structure, monomer. In terms of tissue distribution, expressed in lung, specifically in bronchiolar club cells, type II alveolar cells and epithelial cells of the duct of the bronchial gland (at protein level). Expressed in gastric parietal cells and in epithelial cells of the large intestine and colon (at protein level). Expressed in brown adipocytes (at protein level). Expressed in vascular endothelial cells (at protein level).

It localises to the cytoplasm. It carries out the reaction (2E,6E)-farnesol + NADP(+) = (2E,6E)-farnesal + NADPH + H(+). Its activity is regulated as follows. The dehydrogenase activity is inhibited by 3',3'',5',5''-tetraiodophenolphthalein, phenolphthalein, genistein, quercetin, zearalenone and diethylstilbestrol. Catalyzes the NADPH-dependent reduction of a variety of substrates including aromatic and aliphatic aldehydes, quinones, ketones, dicarbonyl compounds and 17-ketosteroids. Catalyzes the NADP(+)-dependent oxidation of aromatic, alicyclic and aliphatic alcohols, and 17beta-hydroxysteroids. To a lesser extent, can also catalyze the reduction of some aldoses and ketoses and the oxidation of some sugar alcohols. In the stomach, lung and colon tissues, mediates the reduction of farnesal and geranylgeranial into farnesol and geranylgeraniol respectively. By reducing 4-hydroxy-2-nonenal (HNE), produced during lipid peroxidation, into 1,4-dihydro-2-nonene (DHN), protects vascular endothelial cells from damage elicited by oxidized lipoproteins. This Rattus norvegicus (Rat) protein is Aldo-keto reductase family 1 member C15.